Consider the following 317-residue polypeptide: MYSKILGTGSYLPAQIRSNADLEKMVDTSDEWILARTGISERRIAGEDESVATMAHLASVNAIEMAGIDKNDIDLIILATSTPTYSFPSAACEVQGLLGIQGCPAFDLSAACSGFVYALSVADQHIKTGMAKNVLVIGSDAVSHTCDPEDRSTIILFGDGAGAVVLGQSEEPGIISTHLHADGKFGELLSLPVPSRKNEEADKWLYMAGNEVFKVAVTQLSNLVKETLQENQMDKSELDWLVPHQANLRIIKATAKKLSMSMDQVVVTLDRHGNTSAATVPTALDEAVRDGRIQRGQTLLLEAFGGGFTWGSALVKF.

Active-site residues include Cys-112 and His-244. An ACP-binding region spans residues Gln-245–Arg-249. The active site involves Asn-274.

This sequence belongs to the thiolase-like superfamily. FabH family. As to quaternary structure, homodimer.

It localises to the cytoplasm. It catalyses the reaction malonyl-[ACP] + acetyl-CoA + H(+) = 3-oxobutanoyl-[ACP] + CO2 + CoA. It functions in the pathway lipid metabolism; fatty acid biosynthesis. Catalyzes the condensation reaction of fatty acid synthesis by the addition to an acyl acceptor of two carbons from malonyl-ACP. Catalyzes the first condensation reaction which initiates fatty acid synthesis and may therefore play a role in governing the total rate of fatty acid production. Possesses both acetoacetyl-ACP synthase and acetyl transacylase activities. Its substrate specificity determines the biosynthesis of branched-chain and/or straight-chain of fatty acids. The chain is Beta-ketoacyl-[acyl-carrier-protein] synthase III from Aliivibrio fischeri (strain ATCC 700601 / ES114) (Vibrio fischeri).